The sequence spans 227 residues: Phosphoribosylformylglycinamidine synthase subunit PurQ (227 aa).

A Glutamine amidotransferase type-1 domain is found at 3–225; that stretch reads FAVIVLPGSN…VKNWRDTHVT (223 aa). Residue C86 is the Nucleophile of the active site. Residues H194 and E196 contribute to the active site.

In terms of assembly, part of the FGAM synthase complex composed of 1 PurL, 1 PurQ and 2 PurS subunits.

Its subcellular location is the cytoplasm. The catalysed reaction is N(2)-formyl-N(1)-(5-phospho-beta-D-ribosyl)glycinamide + L-glutamine + ATP + H2O = 2-formamido-N(1)-(5-O-phospho-beta-D-ribosyl)acetamidine + L-glutamate + ADP + phosphate + H(+). The enzyme catalyses L-glutamine + H2O = L-glutamate + NH4(+). It participates in purine metabolism; IMP biosynthesis via de novo pathway; 5-amino-1-(5-phospho-D-ribosyl)imidazole from N(2)-formyl-N(1)-(5-phospho-D-ribosyl)glycinamide: step 1/2. Its function is as follows. Part of the phosphoribosylformylglycinamidine synthase complex involved in the purines biosynthetic pathway. Catalyzes the ATP-dependent conversion of formylglycinamide ribonucleotide (FGAR) and glutamine to yield formylglycinamidine ribonucleotide (FGAM) and glutamate. The FGAM synthase complex is composed of three subunits. PurQ produces an ammonia molecule by converting glutamine to glutamate. PurL transfers the ammonia molecule to FGAR to form FGAM in an ATP-dependent manner. PurS interacts with PurQ and PurL and is thought to assist in the transfer of the ammonia molecule from PurQ to PurL. The polypeptide is Phosphoribosylformylglycinamidine synthase subunit PurQ (Bacillus pumilus (strain SAFR-032)).